Reading from the N-terminus, the 369-residue chain is NADH-quinone oxidoreductase subunit H (369 aa).

The next 8 membrane-spanning stretches (helical) occupy residues 20 to 40 (VLLIKIMAVIISVMVSVAYLV), 88 to 108 (ICFLIAPIITFTLALLGWAVI), 133 to 153 (IGVLYILAISSLGVYGIIIAG), 179 to 199 (IGLTIVTVLLATGSLKLGEIV), 205 to 225 (MPYWIDLLLLPMACVFFISSL), 267 to 287 (ILINAMAVIFFFGGWYPPLNI), 293 to 313 (IPGIIWFVLKIIVLLFCFIWI), and 328 to 348 (LGWKVFLPISLLWVVLVSGVL).

This sequence belongs to the complex I subunit 1 family. As to quaternary structure, NDH-1 is composed of 14 different subunits. Subunits NuoA, H, J, K, L, M, N constitute the membrane sector of the complex.

It is found in the cell inner membrane. The enzyme catalyses a quinone + NADH + 5 H(+)(in) = a quinol + NAD(+) + 4 H(+)(out). Functionally, NDH-1 shuttles electrons from NADH, via FMN and iron-sulfur (Fe-S) centers, to quinones in the respiratory chain. The immediate electron acceptor for the enzyme in this species is believed to be ubiquinone. Couples the redox reaction to proton translocation (for every two electrons transferred, four hydrogen ions are translocated across the cytoplasmic membrane), and thus conserves the redox energy in a proton gradient. This subunit may bind ubiquinone. In Ehrlichia canis (strain Jake), this protein is NADH-quinone oxidoreductase subunit H.